A 117-amino-acid chain; its full sequence is Large ribosomal subunit protein uL18 (117 aa).

Belongs to the universal ribosomal protein uL18 family. As to quaternary structure, part of the 50S ribosomal subunit; part of the 5S rRNA/L5/L18/L25 subcomplex. Contacts the 5S and 23S rRNAs.

Functionally, this is one of the proteins that bind and probably mediate the attachment of the 5S RNA into the large ribosomal subunit, where it forms part of the central protuberance. The protein is Large ribosomal subunit protein uL18 of Vibrio atlanticus (strain LGP32) (Vibrio splendidus (strain Mel32)).